Reading from the N-terminus, the 162-residue chain is MKVVLQRVSEASVDVVNELGTLDPTFEPQQIGPGFMILVGVTDEDGDKQIAWLAHKILNLRVFEDAQGKMNRSIQDIGGEILSISQFTLFADVHKGNRPSFIKAGKPEHADFMWIKFDEALRSGGVPVKEGRFGAHMRVGLVNDGPVTIVIDTEHDMPDGTR.

The short motif at Gly145–Pro146 is the Gly-cisPro motif, important for rejection of L-amino acids element.

Belongs to the DTD family. In terms of assembly, homodimer.

The protein resides in the cytoplasm. The enzyme catalyses glycyl-tRNA(Ala) + H2O = tRNA(Ala) + glycine + H(+). The catalysed reaction is a D-aminoacyl-tRNA + H2O = a tRNA + a D-alpha-amino acid + H(+). Functionally, an aminoacyl-tRNA editing enzyme that deacylates mischarged D-aminoacyl-tRNAs. Also deacylates mischarged glycyl-tRNA(Ala), protecting cells against glycine mischarging by AlaRS. Acts via tRNA-based rather than protein-based catalysis; rejects L-amino acids rather than detecting D-amino acids in the active site. By recycling D-aminoacyl-tRNA to D-amino acids and free tRNA molecules, this enzyme counteracts the toxicity associated with the formation of D-aminoacyl-tRNA entities in vivo and helps enforce protein L-homochirality. In Bifidobacterium longum (strain DJO10A), this protein is D-aminoacyl-tRNA deacylase.